Reading from the N-terminus, the 626-residue chain is (+)-3-carene synthase 1, chloroplastic (626 aa).

The transit peptide at 1 to 45 (MSLISAVPLASSCVSKSLISSVREHKALRRAIATLQMSRPGKSVA) directs the protein to the chloroplast. Mg(2+)-binding residues include D377, D381, and D529. The DDXXD motif motif lies at 377–381 (DDMYD).

The protein belongs to the terpene synthase family. Tpsd subfamily. Mg(2+) serves as cofactor. The cofactor is Mn(2+).

It is found in the plastid. Its subcellular location is the chloroplast. The catalysed reaction is (2E)-geranyl diphosphate = (+)-car-3-ene + diphosphate. The enzyme catalyses (2E)-geranyl diphosphate = terpinolene + diphosphate. It functions in the pathway terpene metabolism; oleoresin biosynthesis. Its pathway is secondary metabolite biosynthesis; terpenoid biosynthesis. Functionally, monoterpene synthase (TPS) involved in the biosynthesis of monoterpene natural products included in conifer oleoresin secretions and volatile emissions; these compounds contribute to biotic and abiotic stress defense against herbivores and pathogens. Catalyzes the conversion of (2E)-geranyl diphosphate (GPP) to (+)-3-carene and, to a lower extent, to terpinolene. In Pinus banksiana (Jack pine), this protein is (+)-3-carene synthase 1, chloroplastic.